Reading from the N-terminus, the 134-residue chain is Methylmalonyl-CoA decarboxylase subunit gamma (134 aa).

The segment covering 28–38 has biased composition (low complexity); sequence APAARPAAAPA. The interval 28–67 is disordered; that stretch reads APAARPAAAPAPAAPKPAAAPAPAPAPKTTAAGAGAGANT. The segment covering 39 to 53 has biased composition (pro residues); it reads PAAPKPAAAPAPAPA. Residues 54–67 show a composition bias toward low complexity; that stretch reads PKTTAAGAGAGANT. The region spanning 58–134 is the Biotinyl-binding domain; it reads AAGAGAGANT…NAGDILVVLS (77 aa). Lys-100 carries the post-translational modification N6-biotinyllysine.

In terms of assembly, the methylmalonyl-CoA decarboxylase is composed of four subunits: the carboxyltransferase alpha subunit (MmdA), the tunnel beta subunit (MmdB), the biotin-containing gamma subunit (MmdC) and the delta subunit (MmdD). Biotin is required as a cofactor.

The protein localises to the cell membrane. It catalyses the reaction (S)-methylmalonyl-CoA + Na(+)(in) + H(+)(out) = propanoyl-CoA + Na(+)(out) + CO2. Biotin-containing subunit of the sodium ion pump methylmalonyl-CoA decarboxylase, which converts the chemical energy of a decarboxylation reaction into an electrochemical gradient of Na(+) ions across the cytoplasmic membrane, thereby creating a sodium ion motive force that is used for ATP synthesis. In Propionigenium modestum, this protein is Methylmalonyl-CoA decarboxylase subunit gamma.